The following is a 139-amino-acid chain: MFVKAILLLSIAVAYASADCLHCICMRESGCKPIGCHMDVGSLSCGYYQIKIPYYEDCGQPGKKHGESTEVAWKRCADDLKCATNCVENYYNRYKHECAGTGQGACEVMARNHNGGPRGCHASGTLGYWKGVHSCCGCS.

The first 18 residues, 1 to 18, serve as a signal peptide directing secretion; that stretch reads MFVKAILLLSIAVAYASA. One can recognise an I-type lysozyme domain in the interval 19-138; the sequence is DCLHCICMRE…WKGVHSCCGC (120 aa). 7 disulfide bridges follow: cysteine 20–cysteine 106, cysteine 23–cysteine 138, cysteine 25–cysteine 31, cysteine 36–cysteine 45, cysteine 58–cysteine 86, cysteine 76–cysteine 82, and cysteine 98–cysteine 120. Residue glutamate 28 is the Proton donor of the active site. The active-site Nucleophile is the aspartate 39. A substrate-binding site is contributed by 51-57; it reads KIPYYED. Substrate-binding positions include tyrosine 90 and 113–115; that span reads HNG.

The protein belongs to the glycosyl hydrolase 22 family. Type-I lysozyme subfamily. In terms of tissue distribution, expressed in pharyngeal muscle cell pm3, nerve ring and intestine.

The catalysed reaction is Hydrolysis of (1-&gt;4)-beta-linkages between N-acetylmuramic acid and N-acetyl-D-glucosamine residues in a peptidoglycan and between N-acetyl-D-glucosamine residues in chitodextrins.. Has bacteriolytic activity against Gram-positive bacteria. May play a role in resistance to Gram-positive bacterium S.aureus infection. The chain is Invertebrate-type lysozyme 2 from Caenorhabditis elegans.